The sequence spans 330 residues: Ketol-acid reductoisomerase (NADP(+)) (330 aa).

The KARI N-terminal Rossmann domain maps to 3–184 (LPVYYDKDID…GGGRMGVLET (182 aa)). Residues 26-29 (YGAQ), serine 52, and serine 54 each bind NADP(+). Residue histidine 109 is part of the active site. Glycine 135 serves as a coordination point for NADP(+). A KARI C-terminal knotted domain is found at 185 to 329 (SFKEECESDL…EILRAPFNHK (145 aa)). 4 residues coordinate Mg(2+): aspartate 193, glutamate 197, glutamate 229, and glutamate 233. Serine 254 serves as a coordination point for substrate.

It belongs to the ketol-acid reductoisomerase family. The cofactor is Mg(2+).

It catalyses the reaction (2R)-2,3-dihydroxy-3-methylbutanoate + NADP(+) = (2S)-2-acetolactate + NADPH + H(+). The enzyme catalyses (2R,3R)-2,3-dihydroxy-3-methylpentanoate + NADP(+) = (S)-2-ethyl-2-hydroxy-3-oxobutanoate + NADPH + H(+). It functions in the pathway amino-acid biosynthesis; L-isoleucine biosynthesis; L-isoleucine from 2-oxobutanoate: step 2/4. The protein operates within amino-acid biosynthesis; L-valine biosynthesis; L-valine from pyruvate: step 2/4. Its function is as follows. Involved in the biosynthesis of branched-chain amino acids (BCAA). Catalyzes an alkyl-migration followed by a ketol-acid reduction of (S)-2-acetolactate (S2AL) to yield (R)-2,3-dihydroxy-isovalerate. In the isomerase reaction, S2AL is rearranged via a Mg-dependent methyl migration to produce 3-hydroxy-3-methyl-2-ketobutyrate (HMKB). In the reductase reaction, this 2-ketoacid undergoes a metal-dependent reduction by NADPH to yield (R)-2,3-dihydroxy-isovalerate. The protein is Ketol-acid reductoisomerase (NADP(+)) of Helicobacter pylori (strain Shi470).